The following is an 87-amino-acid chain: uncharacterized protein (87 aa).

The helical transmembrane segment at 29 to 49 (ILWMIIFVVIIAVIIYILISP) threads the bilayer.

The protein localises to the membrane. This is an uncharacterized protein from Methanocaldococcus jannaschii (strain ATCC 43067 / DSM 2661 / JAL-1 / JCM 10045 / NBRC 100440) (Methanococcus jannaschii).